The sequence spans 71 residues: MKADIHPTYEAIEATCSCGNVIKTRSTLCKPIHLDVCSECHPFYTGKQKVLDTGGRIDRFKQRFGVFGATK.

Cys16, Cys18, Cys37, and Cys40 together coordinate Zn(2+).

Belongs to the bacterial ribosomal protein bL31 family. Type A subfamily. Part of the 50S ribosomal subunit. Zn(2+) is required as a cofactor.

Binds the 23S rRNA. The chain is Large ribosomal subunit protein bL31 from Pseudomonas aeruginosa (strain LESB58).